The primary structure comprises 92 residues: Small ribosomal subunit protein uS19 (92 aa).

The protein belongs to the universal ribosomal protein uS19 family.

In terms of biological role, protein S19 forms a complex with S13 that binds strongly to the 16S ribosomal RNA. In Neisseria gonorrhoeae (strain ATCC 700825 / FA 1090), this protein is Small ribosomal subunit protein uS19.